A 230-amino-acid chain; its full sequence is 8-demethylnovobiocic acid C(8)-methyltransferase (230 aa).

It belongs to the methyltransferase superfamily.

It catalyses the reaction 8-desmethylnovobiocic acid + S-adenosyl-L-methionine = novobiocic acid + S-adenosyl-L-homocysteine + H(+). Its pathway is antibiotic biosynthesis; novobiocin biosynthesis. Its function is as follows. C-methyltransferase that methylates 8-demethylnovobiocic acid to produce novobiocic acid in the novobiocin biosynthesis pathway. Novobiocin is an aminocoumarin family antibiotic that targets bacterial DNA gyrases. This chain is 8-demethylnovobiocic acid C(8)-methyltransferase (novO), found in Streptomyces niveus (Streptomyces spheroides).